Consider the following 356-residue polypeptide: Probable protein phosphatase 2C T23F11.1 (356 aa).

One can recognise a PPM-type phosphatase domain in the interval 23–286 (LVGSSCMQGW…DNMTVVLVGL (264 aa)). Mn(2+)-binding residues include Asp59, Gly60, Asp228, and Asp277. The tract at residues 336 to 356 (NAANQEEEEDDNEPAPANFQV) is disordered.

It belongs to the PP2C family. Requires Mg(2+) as cofactor. It depends on Mn(2+) as a cofactor.

The catalysed reaction is O-phospho-L-seryl-[protein] + H2O = L-seryl-[protein] + phosphate. The enzyme catalyses O-phospho-L-threonyl-[protein] + H2O = L-threonyl-[protein] + phosphate. The sequence is that of Probable protein phosphatase 2C T23F11.1 (ppm-2) from Caenorhabditis elegans.